The chain runs to 104 residues: Large ribosomal subunit protein uL24 (104 aa).

This sequence belongs to the universal ribosomal protein uL24 family. In terms of assembly, part of the 50S ribosomal subunit.

In terms of biological role, one of two assembly initiator proteins, it binds directly to the 5'-end of the 23S rRNA, where it nucleates assembly of the 50S subunit. Its function is as follows. One of the proteins that surrounds the polypeptide exit tunnel on the outside of the subunit. This chain is Large ribosomal subunit protein uL24, found in Shewanella pealeana (strain ATCC 700345 / ANG-SQ1).